The sequence spans 192 residues: Transcription termination/antitermination protein NusG (192 aa).

One can recognise a KOW domain in the interval 140–168 (VGEIVIVTDGPFETFTGTVEEIDQEKNRL).

This sequence belongs to the NusG family.

Participates in transcription elongation, termination and antitermination. The chain is Transcription termination/antitermination protein NusG from Rickettsia felis (strain ATCC VR-1525 / URRWXCal2) (Rickettsia azadi).